A 492-amino-acid chain; its full sequence is MEFSVLLLLALTTGFLIFLVSQSQPKTHGHFPPGPRPLPFLGNLLQMDRRGLLSSFIQLQEKYGDVFTVHLGPRPVVMLCGTDTIREALVNQAEAFSGRGTVAVLDPIVQGYGVIFSSGERWKTLRRFSLATMRDFGMGKRSVEERIKEEAQCLVEELKKYKGAPLNPTFYFQCIVANIICSIVFGERFDYKDHQFLHLLNLIYQTFSLMSSLSSQVFELFSAILKYFPGAHRQISKNLQEILDYIGHSVEKHRATLDPSAPRDFIDTYLLRMEKEKSNHHTEFHHQNLVISVLSLFFAGTETTSTTLRYSFLIMLKYPHVAEKVQKEIDQVIGSHRLPTLDDRTKMPYTDAVIHEIQRFTDLAPIGLPHKVTKDTLFRGYLIPKNTEVYPILSSALHDPRYFEQPDSFNPEHFLDANGALKTNEAFMPFSTGKRICLGEGIARNELFLFFTTILQNFSLASPVAPENIDLIPNNSGATKTPPQYQIHFLSR.

Residue serine 129 is modified to Phosphoserine; by PKA. Heme is bound at residue cysteine 437.

Belongs to the cytochrome P450 family. The cofactor is heme. As to expression, expressed only in differentiated keratinocytes in skin.

Its subcellular location is the endoplasmic reticulum membrane. The protein resides in the microsome membrane. It catalyses the reaction an organic molecule + reduced [NADPH--hemoprotein reductase] + O2 = an alcohol + oxidized [NADPH--hemoprotein reductase] + H2O + H(+). Functionally, cytochromes P450 are a group of heme-thiolate monooxygenases. In liver microsomes, this enzyme is involved in an NADPH-dependent electron transport pathway. It oxidizes a variety of structurally unrelated compounds, including steroids, fatty acids, and xenobiotics. The protein is Cytochrome P450 2B19 (Cyp2b19) of Mus musculus (Mouse).